Consider the following 685-residue polypeptide: Pentatricopeptide repeat-containing protein At5g19020, mitochondrial (685 aa).

Residues 1–23 (MIKLIRFFRSRRCWVISLQARCF) constitute a mitochondrion transit peptide. 17 PPR repeats span residues 40 to 74 (TERA…GLDS), 75 to 105 (NGYI…HAKL), 106 to 136 (DSAS…MPER), 137 to 171 (SCVS…GIML), 172 to 206 (NEVT…KLEG), 207 to 237 (RVFV…MPER), 238 to 268 (NLVT…ITEK), 269 to 303 (DIVS…GMKP), 304 to 338 (SEVM…GFDC), 339 to 369 (YDFL…SVKD), 370 to 400 (HIAS…THDK), 401 to 435 (DIFS…SQVK), 437 to 471 (DAIT…TIPP), 472 to 502 (NDNL…TKNI), 506 to 540 (TISP…PIKP), 541 to 576 (NSIT…GIEP), and 577 to 607 (DIKH…MPVK). A type E motif; degenerate region spans residues 612–685 (IWGMLLSASR…EWSRAFSGVV (74 aa)).

This sequence belongs to the PPR family. PCMP-E subfamily.

It localises to the mitochondrion. The polypeptide is Pentatricopeptide repeat-containing protein At5g19020, mitochondrial (PCMP-E42) (Arabidopsis thaliana (Mouse-ear cress)).